Here is a 212-residue protein sequence, read N- to C-terminus: uncharacterized protein (212 aa).

The segment at serine 97–valine 151 is disordered. Residues serine 100–glycine 111 are compositionally biased toward basic and acidic residues.

This is an uncharacterized protein from Mycobacterium tuberculosis (strain CDC 1551 / Oshkosh).